Reading from the N-terminus, the 273-residue chain is TIP41-like protein (273 aa).

The protein belongs to the TIP41 family.

The protein localises to the cytoplasm. Its function is as follows. May be a regulator of serine/threonine-protein phosphatases 2A (PP2A) and 4 (PP4). The chain is TIP41-like protein (tiprl) from Xenopus tropicalis (Western clawed frog).